Reading from the N-terminus, the 344-residue chain is uncharacterized protein (344 aa).

The first 20 residues, 1 to 20 (MEIRIMLFILMMMVMPVSYA), serve as a signal peptide directing secretion.

This sequence belongs to the fimbrial protein family.

Its function is as follows. Part of the yehABCD fimbrial operon. Could contribute to adhesion to various surfaces in specific environmental niches. This is an uncharacterized protein from Escherichia coli (strain K12).